Consider the following 833-residue polypeptide: Protein translocase subunit SecA (833 aa).

Residues Q87, 105–109, and D494 contribute to the ATP site; that span reads GEGKT. Positions 789–816 are disordered; the sequence is PAAVAYSGGEAEAGPAQPHREDPKVGRN. Positions 806–815 are enriched in basic and acidic residues; it reads PHREDPKVGR. Zn(2+)-binding residues include C819, C821, C830, and C831.

It belongs to the SecA family. In terms of assembly, monomer and homodimer. Part of the essential Sec protein translocation apparatus which comprises SecA, SecYEG and auxiliary proteins SecDF-YajC and YidC. It depends on Zn(2+) as a cofactor.

It is found in the cell inner membrane. The protein localises to the cytoplasm. It carries out the reaction ATP + H2O + cellular proteinSide 1 = ADP + phosphate + cellular proteinSide 2.. Part of the Sec protein translocase complex. Interacts with the SecYEG preprotein conducting channel. Has a central role in coupling the hydrolysis of ATP to the transfer of proteins into and across the cell membrane, serving as an ATP-driven molecular motor driving the stepwise translocation of polypeptide chains across the membrane. The chain is Protein translocase subunit SecA from Nitratidesulfovibrio vulgaris (strain DP4) (Desulfovibrio vulgaris).